A 146-amino-acid chain; its full sequence is Small ribosomal subunit protein uS9z (146 aa).

Belongs to the universal ribosomal protein uS9 family.

The protein is Small ribosomal subunit protein uS9z (RPS16A) of Arabidopsis thaliana (Mouse-ear cress).